The following is a 214-amino-acid chain: Thiamine-phosphate synthase (214 aa).

4-amino-2-methyl-5-(diphosphooxymethyl)pyrimidine-binding positions include 37–41 and Asn73; that span reads QYREK. Residues Asp74 and Asp93 each contribute to the Mg(2+) site. Residue Ser112 participates in 4-amino-2-methyl-5-(diphosphooxymethyl)pyrimidine binding. A 2-[(2R,5Z)-2-carboxy-4-methylthiazol-5(2H)-ylidene]ethyl phosphate-binding site is contributed by 139–141; sequence TIS. Position 142 (Lys142) interacts with 4-amino-2-methyl-5-(diphosphooxymethyl)pyrimidine. 2-[(2R,5Z)-2-carboxy-4-methylthiazol-5(2H)-ylidene]ethyl phosphate is bound by residues Gly171 and 191-192; that span reads IS.

It belongs to the thiamine-phosphate synthase family. Mg(2+) serves as cofactor.

The enzyme catalyses 2-[(2R,5Z)-2-carboxy-4-methylthiazol-5(2H)-ylidene]ethyl phosphate + 4-amino-2-methyl-5-(diphosphooxymethyl)pyrimidine + 2 H(+) = thiamine phosphate + CO2 + diphosphate. The catalysed reaction is 2-(2-carboxy-4-methylthiazol-5-yl)ethyl phosphate + 4-amino-2-methyl-5-(diphosphooxymethyl)pyrimidine + 2 H(+) = thiamine phosphate + CO2 + diphosphate. It carries out the reaction 4-methyl-5-(2-phosphooxyethyl)-thiazole + 4-amino-2-methyl-5-(diphosphooxymethyl)pyrimidine + H(+) = thiamine phosphate + diphosphate. Its pathway is cofactor biosynthesis; thiamine diphosphate biosynthesis; thiamine phosphate from 4-amino-2-methyl-5-diphosphomethylpyrimidine and 4-methyl-5-(2-phosphoethyl)-thiazole: step 1/1. Functionally, condenses 4-methyl-5-(beta-hydroxyethyl)thiazole monophosphate (THZ-P) and 2-methyl-4-amino-5-hydroxymethyl pyrimidine pyrophosphate (HMP-PP) to form thiamine monophosphate (TMP). In Listeria monocytogenes serovar 1/2a (strain ATCC BAA-679 / EGD-e), this protein is Thiamine-phosphate synthase.